The primary structure comprises 435 residues: Tol-Pal system protein TolB (435 aa).

The signal sequence occupies residues 1 to 20; it reads MRKIIAGVFIFVFLISNLYA.

This sequence belongs to the TolB family. In terms of assembly, the Tol-Pal system is composed of five core proteins: the inner membrane proteins TolA, TolQ and TolR, the periplasmic protein TolB and the outer membrane protein Pal. They form a network linking the inner and outer membranes and the peptidoglycan layer.

The protein resides in the periplasm. In terms of biological role, part of the Tol-Pal system, which plays a role in outer membrane invagination during cell division and is important for maintaining outer membrane integrity. This chain is Tol-Pal system protein TolB, found in Francisella tularensis subsp. tularensis (strain WY96-3418).